An 877-amino-acid polypeptide reads, in one-letter code: MCSFLRVPSPKGLEPSKGLGAPLQPGTAYPSEMSALGPGMTVSGRKSPLSMEVGLAPEGKDDLEERRVFMGTTSPTELGLRVGLRKDFPCSKTYEERMASPEIRSPSSKGLELRLKRQNISRTVMDGSNLGVHRVSASQETKPPLSALPGRVGLEKERFLAGYCPGRVTQPPLGQGCESPQASGGRRCPVTGDPEGFGASVSKLPALGMECRGELGGESACVVMKPRAETEPPVEVDMGLTRLEEPAEMESPEPQMGLVMEPPAWQLAQQPEEQREAENTEPGVEPPDRIRPIYSGKFFDRMPCWPSAGKVLPIGYRAATCLTERFPRLMTPPEAKKFFNFRYPPAGAERVFYGRANDPQIAPSLTHGIRSKISIPAKVLINPQPITTFQQKMKDKKESVYFSNQRAPLGKSHDQTPGLPKGLDILNTTFGTAIVRETSARDMVNPPKPYKEVFEEAQAGHDLYVVSHNDYFVGEAKNRKYDPSSFHRFNLYGIPTPHFNDGRNMAKTLHWLHELQMKRGAKIVSKRVDDFKEKFQHRLGRVLDPIAETMNVPPDYTFGAFLRPEDYGVGDLIHRRLPGEYLRGKDRQRGLVAAVRHHLKKVNYQNFDTLLAAFRHYDKKGDGVIDRAELQEACDQACLHLDEKLLDQLFEYCDVDKDGLINYLEFANFLTWKDKTPLKEYEERVLIKGRKADCANPAEANVEESEPALLLKPEDIVLKEPGSSEKTLRTLLRPSDKVSNHYKTTSSEISAVVGAVPSTCYPTYGVPTIRSDIPAPLIRRVSDRTSYGEEGNAYSLLHPTIFAQKGVFERDFFKTRSKQEISEILCNIGVKLSEDEFENVWNLASKKHHRGEVCVENIRSVLDELQHADGAKCKAAT.

2 disordered regions span residues 1 to 47 (MCSF…GRKS) and 268 to 290 (AQQPEEQREAENTEPGVEPPDRI). EF-hand domains follow at residues 605–640 (QNFDTLLAAFRHYDKKGDGVIDRAELQEACDQACLH) and 641–676 (LDEKLLDQLFEYCDVDKDGLINYLEFANFLTWKDKT). Ca(2+) is bound by residues aspartate 618, aspartate 622, glutamate 629, aspartate 654, aspartate 656, aspartate 658, and glutamate 665.

In terms of assembly, microtubule inner protein component of sperm flagellar doublet microtubules. Interacts with STIM1 and ORAI1; the interactions take place upon Ca(2+)-store depletion and dissociate through a Ca(2+)-dependent mechanism. Interaction with STIM1 inhibits STIM1 interaction with SARAF. In terms of tissue distribution, expressed in trachea multiciliated cells.

The protein localises to the cytoplasm. Its subcellular location is the cytoskeleton. The protein resides in the cilium axoneme. It localises to the flagellum axoneme. Its function is as follows. Microtubule inner protein (MIP) part of the dynein-decorated doublet microtubules (DMTs) in cilia axoneme, which is required for motile cilia beating. Cytosolic sensor for calcium, modulates the interaction of STIM1 and ORAI1 upon store depletion and the activation of store-operated Ca(2+) entry (SOCE) and NFAT translocation from cytosol to nucleus. This Bos taurus (Bovine) protein is EF-hand domain-containing family member B.